A 376-amino-acid polypeptide reads, in one-letter code: Glutamate 5-kinase (376 aa).

Lys18 is an ATP binding site. Substrate is bound by residues Ser58, Asp145, and Asn157. Residues 177–178 (SD) and 218–224 (TGGMASK) each bind ATP. The PUA domain maps to 280-358 (TGALTLDAGA…SELPGELRRP (79 aa)).

This sequence belongs to the glutamate 5-kinase family.

The protein localises to the cytoplasm. The enzyme catalyses L-glutamate + ATP = L-glutamyl 5-phosphate + ADP. The protein operates within amino-acid biosynthesis; L-proline biosynthesis; L-glutamate 5-semialdehyde from L-glutamate: step 1/2. Functionally, catalyzes the transfer of a phosphate group to glutamate to form L-glutamate 5-phosphate. The polypeptide is Glutamate 5-kinase (Mycobacterium tuberculosis (strain CDC 1551 / Oshkosh)).